Consider the following 85-residue polypeptide: Probable small nuclear ribonucleoprotein G (85 aa).

The 73-residue stretch at Gln6–Met78 folds into the Sm domain.

This sequence belongs to the snRNP Sm proteins family. Core component of the spliceosomal U1, U2, U4 and U5 small nuclear ribonucleoproteins (snRNPs), the building blocks of the spliceosome. Most spliceosomal snRNPs contain a common set of Sm proteins, SNRPB, SNRPD1, SNRPD2, SNRPD3, SNRPE, SNRPF and SNRPG that assemble in a heptameric protein ring on the Sm site of the small nuclear RNA to form the core snRNP. Component of the U1 snRNP. Component of the U4/U6-U5 tri-snRNP complex. Component of the U7 snRNP complex. Component of the U11/U12 snRNPs that are part of the U12-type spliceosome.

Its subcellular location is the cytoplasm. The protein resides in the cytosol. The protein localises to the nucleus. Its function is as follows. Plays a role in pre-mRNA splicing as a core component of the spliceosomal U1, U2, U4 and U5 small nuclear ribonucleoproteins (snRNPs), the building blocks of the spliceosome. Component of both the pre-catalytic spliceosome B complex and activated spliceosome C complexes. Is also a component of the minor U12 spliceosome. The polypeptide is Probable small nuclear ribonucleoprotein G (snrpG) (Dictyostelium discoideum (Social amoeba)).